A 358-amino-acid chain; its full sequence is Envelope glycoprotein K (358 aa).

Residues methionine 1 to glutamate 33 form the signal peptide. At asparagine 34–leucine 141 the chain is on the extracellular side. N-linked (GlcNAc...) asparagine; by host glycans are attached at residues asparagine 57 and asparagine 80. The helical transmembrane segment at tryptophan 142 to valine 162 threads the bilayer. At asparagine 163–proline 235 the chain is on the cytoplasmic side. The chain crosses the membrane as a helical span at residues leucine 236–alanine 256. The Extracellular segment spans residues threonine 257–histidine 273. The chain crosses the membrane as a helical span at residues valine 274–isoleucine 294. Residues aspartate 295–asparagine 323 lie on the Cytoplasmic side of the membrane. Residues isoleucine 324–glycine 344 traverse the membrane as a helical segment. The Extracellular portion of the chain corresponds to alanine 345–glycine 358.

It belongs to the alphaherpesvirinae glycoprotein K family. As to quaternary structure, interacts (via UL20 interaction region) with protein UL20 (via N-terminus); this interaction probably plays a role in the coordinate transport of protein UL20 and gK to the trans-Golgi network (TGN), and is required for the cell surface expression of gK.

The protein resides in the host cell membrane. Its subcellular location is the host endosome membrane. It localises to the host Golgi apparatus membrane. Its function is as follows. Glycoprotein that probably modulates membrane fusion events during secondary envelopment of cytoplasmic capsids that bud into specific trans-Golgi network (TGN)-derived membranes. Also plays a role, together with gB, in virus-induced cell-to-cell fusion (syncytia formation). Seems to block fusion of virions with infected-cell membranes. In Psittacid herpesvirus 1 (isolate Amazon parrot/-/97-0001/1997) (PsHV-1), this protein is Envelope glycoprotein K (gK).